Here is a 317-residue protein sequence, read N- to C-terminus: Malate dehydrogenase (317 aa).

Residues 13 to 18 and Asp38 each bind NAD(+); that span reads GAGNIG. Substrate is bound by residues Arg87 and Arg93. Residues Asn100 and 123 to 125 each bind NAD(+); that span reads VTN. 2 residues coordinate substrate: Asn125 and Arg156. His180 functions as the Proton acceptor in the catalytic mechanism.

It belongs to the LDH/MDH superfamily. MDH type 3 family.

The catalysed reaction is (S)-malate + NAD(+) = oxaloacetate + NADH + H(+). Functionally, catalyzes the reversible oxidation of malate to oxaloacetate. This chain is Malate dehydrogenase, found in Anaplasma marginale (strain St. Maries).